A 377-amino-acid chain; its full sequence is MSRGIIIIGSGFAARQLVKNIRKQDAHVPLTLIAADSMDEYNKPDLSHVISQSQRADDLTRQLAGEFAEQFNLRLFPHTWVADIDADAHVVKSQDKQWQYDKLVLATGATAFVPPITGRELMLTLNSQQEYRACETQLRDAQRVLIIGGGLIGSELAMDFCRAGKTVTLMDNAASLLASLMPPEVSSRLQHHLTDMGVHLLLKSQLQKLEKTEAGIRATLVSQHSIEVDAVIAATGLRPETALARRAGVAVNRGVCVDSYLQTSHPDIYAIGDCAEINGQVLPFLQPIQLSAMYLAKNLLGGNAPLKLPAMLVKVKTPELPLHLAGETQRRDLSWHITAESDGMIAKGMSGEGQLRAFVVSEDRMKEAFALLKTLSV.

This sequence belongs to the FAD-dependent oxidoreductase family. FAD serves as cofactor.

The protein localises to the cytoplasm. It carries out the reaction 2 reduced [nitric oxide reductase rubredoxin domain] + NAD(+) + H(+) = 2 oxidized [nitric oxide reductase rubredoxin domain] + NADH. The protein operates within nitrogen metabolism; nitric oxide reduction. One of at least two accessory proteins for anaerobic nitric oxide (NO) reductase. Reduces the rubredoxin moiety of NO reductase. This Salmonella paratyphi B (strain ATCC BAA-1250 / SPB7) protein is Nitric oxide reductase FlRd-NAD(+) reductase.